A 72-amino-acid polypeptide reads, in one-letter code: Heat-stable enterotoxin A3/A4 (72 aa).

The N-terminal stretch at 1-19 is a signal peptide; it reads MKKSILFIFLSVLSFSPFA. Residues 20–53 constitute a propeptide that is removed on maturation; that stretch reads QDAKPVESSKEKITLESKKCNIAKKSNKSGPESM. 3 disulfides stabilise this stretch: cysteine 59-cysteine 64, cysteine 60-cysteine 68, and cysteine 63-cysteine 71.

The protein belongs to the heat-stable enterotoxin family.

Its subcellular location is the secreted. Its function is as follows. Toxin which activates the particulate form of guanylate cyclase and increases cyclic GMP levels within the host intestinal epithelial cells. The sequence is that of Heat-stable enterotoxin A3/A4 (sta3) from Escherichia coli.